The chain runs to 485 residues: MSIRYESVENLLTLIKDKKIKPSDVVKDIYDAIEETDPTIKSFLALDKENAIKKAQELDELQAKDQMDGKLFGIPMGIKDNIITNGLETTCASKMLEGFVPIYESTVMEKLHNENAVLIGKLNMDEFAMGGSTETSYFKKTVNPFDHKAVPGGSSGGSAAAVAAGLVPFSLGSDTGGSIRQPAAYCGVVGMKPTYGRVSRFGLVAFASSLDQIGPLTRNVKDNAIVLEAISGADVNDSTSAPVDDVDFTSEIGKDIKGLKVALPKEYLGEGVADDVKEAVQNAVETLKSLGAVVEEVSLPNTKFGIPSYYVIASSEASSNLSRFDGIRYGYHSKEAHSLEELYKMSRSEGFGKEVKRRIFLGTFALSSGYYDAYYKKSQKVRTLIKNDFDKVFENYDVVVGPTAPTTAFNLGEEIDDPLTMYANDLLTTPVNLAGLPGISVPCGQSNGRPIGLQFIGKPFDEKTLYRVAYQYETQYNLHDVYEKL.

Residues K79 and S154 each act as charge relay system in the active site. S178 acts as the Acyl-ester intermediate in catalysis.

The protein belongs to the amidase family. GatA subfamily. Heterotrimer of A, B and C subunits.

It catalyses the reaction L-glutamyl-tRNA(Gln) + L-glutamine + ATP + H2O = L-glutaminyl-tRNA(Gln) + L-glutamate + ADP + phosphate + H(+). In terms of biological role, allows the formation of correctly charged Gln-tRNA(Gln) through the transamidation of misacylated Glu-tRNA(Gln) in organisms which lack glutaminyl-tRNA synthetase. The reaction takes place in the presence of glutamine and ATP through an activated gamma-phospho-Glu-tRNA(Gln). The protein is Glutamyl-tRNA(Gln) amidotransferase subunit A of Staphylococcus aureus (strain USA300 / TCH1516).